We begin with the raw amino-acid sequence, 502 residues long: Galactose/methyl galactoside import ATP-binding protein MglA (502 aa).

2 ABC transporter domains span residues 10-245 (LEMT…VGRE) and 255-502 (NTPK…SRYL). 42-49 (GENGAGKS) is an ATP binding site.

It belongs to the ABC transporter superfamily. Galactose/methyl galactoside importer (TC 3.A.1.2.3) family. In terms of assembly, the complex is composed of one ATP-binding protein (MglA), two transmembrane proteins (MglC) and a solute-binding protein (MglB).

The protein resides in the cell inner membrane. It carries out the reaction D-galactose(out) + ATP + H2O = D-galactose(in) + ADP + phosphate + H(+). The enzyme catalyses methyl beta-D-galactoside(out) + ATP + H2O = methyl beta-D-galactoside(in) + ADP + phosphate + H(+). Its function is as follows. Part of the ABC transporter complex MglABC involved in galactose/methyl galactoside import. Responsible for energy coupling to the transport system. This is Galactose/methyl galactoside import ATP-binding protein MglA from Vibrio vulnificus (strain CMCP6).